The sequence spans 325 residues: uncharacterized protein (325 aa).

Disordered regions lie at residues Leu32 to Ile65 and Gly99 to Gly152. In terms of domain architecture, Globin spans Leu153 to Tyr291.

This is an uncharacterized protein from Caenorhabditis elegans.